Reading from the N-terminus, the 3396-residue chain is Versican core protein (3396 aa).

Positions Met1–Ala20 are cleaved as a signal peptide. Positions Leu21–Thr146 constitute an Ig-like V-type domain. Disulfide bonds link Cys44–Cys130, Cys172–Cys243, Cys196–Cys217, Cys270–Cys345, and Cys294–Cys315. A glycan (N-linked (GlcNAc...) asparagine) is linked at Asn57. Link domains lie at Val150–Val245 and Asp251–Lys347. Asn330 carries N-linked (GlcNAc...) asparagine glycosylation. The interval Pro348–Gly1335 is GAG-alpha (glucosaminoglycan attachment domain). Residues Ala420–Thr430 show a composition bias toward polar residues. Disordered stretches follow at residues Ala420–Tyr439 and Ser603–Trp622. Asn615 carries N-linked (GlcNAc...) asparagine glycosylation. O-linked (Xyl...) (chondroitin sulfate) serine glycosylation is present at Ser659. Asn782 and Asn809 each carry an N-linked (GlcNAc...) asparagine glycan. Disordered regions lie at residues Glu807–Ala829, Ile1126–Leu1154, and Arg1277–Thr1316. A compositionally biased stretch (polar residues) spans Thr811–Ser824. The span at Glu1143 to Leu1154 shows a compositional bias: low complexity. Asn1332 and Asn1398 each carry an N-linked (GlcNAc...) asparagine glycan. The segment at Arg1336–Gly3089 is GAG-beta. Disordered stretches follow at residues Val1420 to Glu1497 and Phe1510 to Pro1539. Residues Lys1422 to Gln1433 are compositionally biased toward basic and acidic residues. Residues Asn1442 and Asn1468 are each glycosylated (N-linked (GlcNAc...) asparagine). Positions Glu1469 to Thr1480 are enriched in low complexity. A compositionally biased stretch (basic and acidic residues) spans Lys1517 to Glu1538. Residues Ser1548 and Ser1631 are each glycosylated (O-linked (Xyl...) (chondroitin sulfate) serine). N-linked (GlcNAc...) asparagine glycosylation occurs at Asn1663. 2 disordered regions span residues Ser1717 to Thr1737 and Pro1759 to Ser1789. The span at Val1720–Glu1729 shows a compositional bias: basic and acidic residues. Residues Asn1760–Gln1781 show a composition bias toward polar residues. A glycan (N-linked (GlcNAc...) asparagine) is linked at Asn1898. O-linked (Xyl...) (chondroitin sulfate) serine glycosylation is found at Ser1935 and Ser1959. 3 disordered regions span residues Ala1962–Val1994, Arg2107–Ala2134, and Lys2168–Asn2188. Low complexity predominate over residues Thr1969–Val1978. A compositionally biased stretch (acidic residues) spans Glu2111–Ile2120. Residue Ser2116 is modified to Phosphoserine; by FAM20C. Asn2179 is a glycosylation site (N-linked (GlcNAc...) asparagine). Ser2247 and Ser2254 each carry an O-linked (Xyl...) (chondroitin sulfate) serine glycan. 5 N-linked (GlcNAc...) asparagine glycosylation sites follow: Asn2272, Asn2280, Asn2360, Asn2385, and Asn2392. 4 disordered regions span residues Thr2371–Thr2396, Ser2445–Ser2473, Ser2493–Gly2518, and Asp2598–Thr2617. Composition is skewed to polar residues over residues Ser2445–Ser2461 and Asn2496–Glu2513. An N-linked (GlcNAc...) asparagine glycan is attached at Asn2496. Residue Ser2608 is modified to Phosphoserine. The residue at position 2617 (Thr2617) is a Phosphothreonine. Asn2628 carries N-linked (GlcNAc...) asparagine glycosylation. O-linked (Xyl...) (chondroitin sulfate) serine glycosylation is found at Ser2722, Ser2723, and Ser2767. 2 disordered regions span residues Gly2834–Ser2856 and Glu2881–Gly2905. Over residues Thr2896 to Gly2905 the composition is skewed to basic and acidic residues. A glycan (N-linked (GlcNAc...) asparagine) is linked at Asn2934. O-linked (Xyl...) (chondroitin sulfate) serine glycosylation is present at Ser2941. Asn3067 carries an N-linked (GlcNAc...) asparagine glycan. One can recognise an EGF-like 1 domain in the interval Gly3089–Glu3125. Disulfide bonds link Cys3093–Cys3104, Cys3098–Cys3113, Cys3115–Cys3124, Cys3131–Cys3142, Cys3136–Cys3151, Cys3153–Cys3162, Cys3169–Cys3180, Cys3197–Cys3289, Cys3265–Cys3281, Cys3296–Cys3339, and Cys3325–Cys3352. In terms of domain architecture, EGF-like 2; calcium-binding spans Asp3127–Glu3163. The C-type lectin domain maps to Phe3176–Lys3290. One can recognise a Sushi domain in the interval Val3294 to Asn3354. 2 N-linked (GlcNAc...) asparagine glycosylation sites follow: Asn3369 and Asn3379. The span at Ser3371 to Thr3380 shows a compositional bias: polar residues. Positions Ser3371–Arg3396 are disordered.

The protein belongs to the aggrecan/versican proteoglycan family. In terms of assembly, interacts with FBLN1. Phosphorylated by FAM20C in the extracellular medium. In terms of processing, proteolytically cleaved by ADAMTS5 and ADAMTS15 in the pericellular matrix surrounding myoblasts, facilitating myoblast contact and fusion which is required for skeletal muscle development and regeneration. As to expression, detected in placenta (at protein level). Detected in cerebrospinal fluid, fibroblasts and urine (at protein level). Expressed in the retina (at protein level). Cerebral white matter and plasma. Isoform V0: Expressed in normal brain, gliomas, medulloblastomas, schwannomas, neurofibromas, and meningiomas. Isoform V1: Expressed in normal brain, gliomas, medulloblastomas, schwannomas, neurofibromas, and meningiomas. Isoform V2: Restricted to normal brain and gliomas. Isoform V3: Found in all these tissues except medulloblastomas.

It is found in the secreted. The protein localises to the extracellular space. Its subcellular location is the extracellular matrix. The protein resides in the cell projection. It localises to the cilium. It is found in the photoreceptor outer segment. The protein localises to the interphotoreceptor matrix. Functionally, may play a role in intercellular signaling and in connecting cells with the extracellular matrix. May take part in the regulation of cell motility, growth and differentiation. Binds hyaluronic acid. In Homo sapiens (Human), this protein is Versican core protein (VCAN).